Consider the following 263-residue polypeptide: Acyl-[acyl-carrier-protein]--UDP-N-acetylglucosamine O-acyltransferase (263 aa).

Belongs to the transferase hexapeptide repeat family. LpxA subfamily. Homotrimer.

The protein resides in the cytoplasm. The catalysed reaction is a (3R)-hydroxyacyl-[ACP] + UDP-N-acetyl-alpha-D-glucosamine = a UDP-3-O-[(3R)-3-hydroxyacyl]-N-acetyl-alpha-D-glucosamine + holo-[ACP]. It participates in glycolipid biosynthesis; lipid IV(A) biosynthesis; lipid IV(A) from (3R)-3-hydroxytetradecanoyl-[acyl-carrier-protein] and UDP-N-acetyl-alpha-D-glucosamine: step 1/6. In terms of biological role, involved in the biosynthesis of lipid A, a phosphorylated glycolipid that anchors the lipopolysaccharide to the outer membrane of the cell. This is Acyl-[acyl-carrier-protein]--UDP-N-acetylglucosamine O-acyltransferase from Campylobacter jejuni subsp. doylei (strain ATCC BAA-1458 / RM4099 / 269.97).